Reading from the N-terminus, the 302-residue chain is Uricase (302 aa).

Ser-2 is modified (N-acetylserine). Active-site charge relay system residues include Lys-11 and Thr-58. The 5-hydroxyisourate site is built by Thr-58, Asp-59, Phe-160, Arg-177, Val-228, Gln-229, and Asn-255. Thr-58 contributes to the O2 binding site. Positions 58, 59, 160, 177, 228, 229, and 255 each coordinate urate. Residue Asn-255 coordinates O2. The active-site Charge relay system is the His-257. Residues 300–302 (SKL) carry the Microbody targeting signal motif.

This sequence belongs to the uricase family. Homotetramer.

Its subcellular location is the peroxisome. It carries out the reaction urate + O2 + H2O = 5-hydroxyisourate + H2O2. It participates in purine metabolism; urate degradation; (S)-allantoin from urate: step 1/3. With respect to regulation, 8-Azaxanthine is one of the most potent competitive inhibitors of uricase activity. Hypoxanthine has only a small inhibitor effect, and caffeine has no effect at all. Azide not only competes with dioxygen but also competes with the substrate for its enzymatic site. In terms of biological role, urate oxidase is a cofactorless enzyme involved in the metabolism of purines. Catalyzes, in the presence of molecular oxygen, the hydroxylation of uric acid to metastable 5-hydroxyisourate (5-HIU) which is further degraded to allantoin. The protein is Uricase of Aspergillus flavus.